We begin with the raw amino-acid sequence, 1379 residues long: DNA-directed RNA polymerase subunit beta'' (1379 aa).

4 residues coordinate Zn(2+): Cys224, Cys295, Cys302, and Cys305. The tract at residues 503–524 (SVQSLSVKRRSTSKLSETNDEA) is disordered.

This sequence belongs to the RNA polymerase beta' chain family. RpoC2 subfamily. In plastids the minimal PEP RNA polymerase catalytic core is composed of four subunits: alpha, beta, beta', and beta''. When a (nuclear-encoded) sigma factor is associated with the core the holoenzyme is formed, which can initiate transcription. The cofactor is Zn(2+).

It is found in the plastid. It carries out the reaction RNA(n) + a ribonucleoside 5'-triphosphate = RNA(n+1) + diphosphate. Functionally, DNA-dependent RNA polymerase catalyzes the transcription of DNA into RNA using the four ribonucleoside triphosphates as substrates. In Cuscuta exaltata (Tall dodder), this protein is DNA-directed RNA polymerase subunit beta''.